Reading from the N-terminus, the 701-residue chain is Interleukin-1 receptor accessory protein-like 1-A (701 aa).

An N-terminal signal peptide occupies residues 1–19 (MTALNPVLFLLCGVSVSLS). Topologically, residues 20–361 (LKVVSKRGSV…IGKRVELMYT (342 aa)) are extracellular. Residues 33-133 (TDWSVDYLKY…RNSTFCMKVS (101 aa)) enclose the Ig-like C2-type 1 domain. A disulfide bond links cysteine 54 and cysteine 121. N-linked (GlcNAc...) asparagine glycans are attached at residues asparagine 64, asparagine 125, asparagine 141, asparagine 216, asparagine 267, and asparagine 334. Ig-like C2-type domains follow at residues 146–235 (CYNS…TYLS) and 245–353 (PRIL…VQIG). A disulfide bond links cysteine 167 and cysteine 219. A disulfide bond links cysteine 270 and cysteine 337. The helical transmembrane segment at 362 to 382 (VELAGGLGAILLLLALLLSVY) threads the bilayer. Residues 383–701 (KCYRIELLLC…RETSISSVIW (319 aa)) lie on the Cytoplasmic side of the membrane. The 157-residue stretch at 407–563 (KEYDAYLSYS…RFWKQLRYTM (157 aa)) folds into the TIR domain. Residue glutamate 495 is part of the active site. The required for synaptic vesicle accumulation during synaptogenesis stretch occupies residues 568–701 (PQQTITNHAL…RETSISSVIW (134 aa)).

Belongs to the interleukin-1 receptor family.

Its subcellular location is the cell membrane. The protein resides in the cytoplasm. The enzyme catalyses NAD(+) + H2O = ADP-D-ribose + nicotinamide + H(+). Its function is as follows. May regulate secretion and presynaptic differentiation through inhibition of the activity of N-type voltage-gated calcium channel. During presynaptic differentiation may regulate both synaptic vesicle accumulation in axon terminals and subsequent axon terminal remodeling. The polypeptide is Interleukin-1 receptor accessory protein-like 1-A (il1rapl1a) (Danio rerio (Zebrafish)).